The sequence spans 273 residues: Putative pyruvate, phosphate dikinase regulatory protein 2 (273 aa).

Residue Gly151 to Thr158 participates in ADP binding.

Belongs to the pyruvate, phosphate/water dikinase regulatory protein family. PDRP subfamily.

The catalysed reaction is N(tele)-phospho-L-histidyl/L-threonyl-[pyruvate, phosphate dikinase] + ADP = N(tele)-phospho-L-histidyl/O-phospho-L-threonyl-[pyruvate, phosphate dikinase] + AMP + H(+). It carries out the reaction N(tele)-phospho-L-histidyl/O-phospho-L-threonyl-[pyruvate, phosphate dikinase] + phosphate + H(+) = N(tele)-phospho-L-histidyl/L-threonyl-[pyruvate, phosphate dikinase] + diphosphate. In terms of biological role, bifunctional serine/threonine kinase and phosphorylase involved in the regulation of the pyruvate, phosphate dikinase (PPDK) by catalyzing its phosphorylation/dephosphorylation. This is Putative pyruvate, phosphate dikinase regulatory protein 2 from Staphylococcus saprophyticus subsp. saprophyticus (strain ATCC 15305 / DSM 20229 / NCIMB 8711 / NCTC 7292 / S-41).